Consider the following 172-residue polypeptide: MDLKSLIRDIPDFPKPGILFRDITTLLRDRQGLRYTIDFLAEKCFEANLDIDYVIGMESRGFIFGTPLAYKLGAGFIPVRKKGKLPAAVHSIEYELEYGTDCLEVHRDALHPDSRVLIVDDLIATGGTASATAKLVQQIGCELVGFGFIIELRDLQGRKHLPDVPIISLVEY.

It belongs to the purine/pyrimidine phosphoribosyltransferase family. In terms of assembly, homodimer.

The protein resides in the cytoplasm. It catalyses the reaction AMP + diphosphate = 5-phospho-alpha-D-ribose 1-diphosphate + adenine. The protein operates within purine metabolism; AMP biosynthesis via salvage pathway; AMP from adenine: step 1/1. Functionally, catalyzes a salvage reaction resulting in the formation of AMP, that is energically less costly than de novo synthesis. The protein is Adenine phosphoribosyltransferase of Trichormus variabilis (strain ATCC 29413 / PCC 7937) (Anabaena variabilis).